The following is a 173-amino-acid chain: Terpene cyclase subB (173 aa).

A run of 4 helical transmembrane segments spans residues 11–31 (PGYL…GLGW), 51–71 (ALMP…IYPF), 112–132 (LPFI…ALAL), and 141–161 (AFSA…QLLS).

It belongs to the paxB family.

The protein resides in the membrane. Its pathway is secondary metabolite biosynthesis; terpenoid biosynthesis. Its function is as follows. Terpene cyclase; part of the gene cluster that mediates the biosynthesis of the immunosuppressants subglutinols, meroterpenoids consisting of an alpha-pyrone (4-hydroxy-5,6-dimethyl-2-pyrone) moiety attached to a decalin core fused to a five-membered cyclic ether carrying a prenylside chain. The first step of the pathway is the synthesis of the alpha-pyrone moiety by the polyketide synthase subA via condensation of one acetyl-CoA starter unit with 3 malonyl-CoA units and 2 methylations. The alpha-pyrone is then combined with geranylgeranyl pyrophosphate (GGPP) formed by the GGPP synthase subD through the action of the prenyltransferase subC to yield a linear alpha-pyrone diterpenoid. Subsequent steps in the subglutinol biosynthetic pathway involve the decalin core formation, which is thought to be initiated by the epoxidation of the C10-C11 olefin by the FAD-dependent oxidoreductase subE. The following cyclization cascade would be catalyzed by the terpene cyclase subB. Lastly, the FAD-dependent dehydrogenase subF probably catalyzes the five-membered cyclic ether formation to complete the formation of subglutinol A. Subsequent redox reactions appear to give rise to subglutinol C and D, however, it remains unclear which enzymes are responsible for these transformations. SubD may have secondary function in the conversion of the identified subglutinols to subglutinol analog 45, which seems to be the major product of the cluster. This is Terpene cyclase subB from Metarhizium robertsii (strain ARSEF 23 / ATCC MYA-3075) (Metarhizium anisopliae (strain ARSEF 23)).